A 251-amino-acid polypeptide reads, in one-letter code: Core protein VP8 (251 aa).

Residues 1-32 constitute a propeptide, removed by core protease OPG083/I7; sequence MSLLLENLIEEDTIFFAGSISEYDDLQMVIAG.

It belongs to the orthopoxvirus OPG098 family. Post-translationally, undergoes morphogenesis-associated proteolysis which cleaves the 28 kDa to a 25-kDa product. Proteolytic cleavage of major core proteins P4a (OPG136/A10L), P4b (OPG129/A3L), and VP8 (OPG098/L4R), which occurs at a late stage of core formation, is required for production of infectious mature virions (MV).

Its subcellular location is the virion. The protein localises to the host cytoplasm. Its function is as follows. Major core structural protein. The chain is Core protein VP8 (OPG098) from Vaccinia virus (strain Western Reserve) (VACV).